A 351-amino-acid polypeptide reads, in one-letter code: Porphobilinogen deaminase (351 aa).

An S-(dipyrrolylmethanemethyl)cysteine modification is found at Cys242. Residues 257–306 enclose the RPE1 insert domain; sequence PRHLSKLAYREVLEGNTEALATAAYKSNRTDASTGLTYKLPLEVEFGKVS.

The protein belongs to the HMBS family. In terms of assembly, monomer. It depends on dipyrromethane as a cofactor.

The catalysed reaction is 4 porphobilinogen + H2O = hydroxymethylbilane + 4 NH4(+). It functions in the pathway porphyrin-containing compound metabolism; protoporphyrin-IX biosynthesis; coproporphyrinogen-III from 5-aminolevulinate: step 2/4. Tetrapolymerization of the monopyrrole PBG into the hydroxymethylbilane pre-uroporphyrinogen in several discrete steps. The polypeptide is Porphobilinogen deaminase (Rickettsia conorii (strain ATCC VR-613 / Malish 7)).